Here is a 491-residue protein sequence, read N- to C-terminus: MNSKKLNIGPKDIINSLPEALIYHILSFLSTKEAAITSLLSRKWRYFFAFVPNLDFDDPVRMQPDMGNQEETEIHTSFMDFVDRVLALRGNSHVNKFSLKCGNGVDGVGVTRWILNTLELSVSELDLSIASDTTYLFPSKVFVSKSLVRLRIEARNGLAFGSLVIDVGDVSLPKLKTLYLDSVELDYQIICLAKLLSGCHVLEELVMIDVVWNFWESCSASIPTLKRLTFFTEEGWNNPPPSVTFDNPALVYFEYTDTVALKYEKVNFDSLVEARLGLRVGYEESENPIQVPFGFPFPLIEYAMVGDATDLLMGIRNVQVLYLYASTVEVLTFRCKAIPIFNNLTRLTIESNTKVGWDSLPNLLKNCPNLKTLVFQGLLHKATDRCGDMCPCKPPENIHTCLSSSPVKVLEILKFGEINDKTELEQTKHFLELMPHLEQLNIYYDTSVDDNLVKVSKQLQEIPGVASAKCKVQVISDNLTLSVTLPSSSSI.

An F-box domain is found at 11-57 (KDIINSLPEALIYHILSFLSTKEAAITSLLSRKWRYFFAFVPNLDFD). 7 LRR repeats span residues 127–154 (LSIA…RIEA), 156–182 (NGLA…YLDS), 184–209 (ELDY…VMID), 325–351 (ASTV…TIES), 352–377 (NTKV…VFQG), 419–444 (NDKT…NIYY), and 472–491 (VQVI…SSSI).

This chain is Putative F-box/LRR-repeat protein At3g59230, found in Arabidopsis thaliana (Mouse-ear cress).